Consider the following 156-residue polypeptide: CRIB domain-containing protein RIC10 (156 aa).

Residues 30–43 (IGFPTDVKHVAHIG) enclose the CRIB domain. Residues 68-77 (RPSSFSNARP) show a composition bias toward polar residues. The tract at residues 68–156 (RPSSFSNARP…SYKSTVSRLI (89 aa)) is disordered. The segment covering 78 to 96 (STSFFTSSSSTDFDQGSSQ) has biased composition (low complexity). Basic residues predominate over residues 117 to 128 (NNKKKSSRRKKS). Low complexity predominate over residues 129–156 (SSSSSSPKSSRSSVLSKSSYKSTVSRLI).

As to expression, expressed in roots, leaves, flowers and pollen.

The protein resides in the cytoplasm. Functionally, functions as a downstream effector of Rho-related GTP binding proteins of the 'Rho of Plants' (ROPs) family. Participates in the propagation of ROP GTPase signals in specific cellular responses. Is involved in pollen tube growth regulation. In Arabidopsis thaliana (Mouse-ear cress), this protein is CRIB domain-containing protein RIC10 (RIC10).